Here is a 211-residue protein sequence, read N- to C-terminus: Germin-like protein subfamily 3 member 3 (211 aa).

Positions 1 to 20 (MKMIIQIFFIISLISTISFA) are cleaved as a signal peptide. An intrachain disulfide couples Cys-26 to Cys-41. Positions 55–201 (TGLGTAGNTS…TTFLSDAEVK (147 aa)) constitute a Cupin type-1 domain. A glycan (N-linked (GlcNAc...) asparagine) is linked at Asn-62. Positions 103, 105, and 110 each coordinate Mn(2+). At Ser-140 the chain carries Phosphoserine. A Mn(2+)-binding site is contributed by His-149.

It belongs to the germin family. Oligomer (believed to be a pentamer but probably hexamer). As to expression, expressed in leaves and flowers.

It is found in the secreted. It localises to the extracellular space. The protein resides in the apoplast. May play a role in plant defense. Probably has no oxalate oxidase activity even if the active site is conserved. In Arabidopsis thaliana (Mouse-ear cress), this protein is Germin-like protein subfamily 3 member 3 (GER3).